We begin with the raw amino-acid sequence, 309 residues long: Dermonecrotic toxin LarSicTox-alphaIB2bi (309 aa).

A signal peptide is located at residue valine 1. Positions 2–27 (RATEKFAPIYFFCHPLQSAETDVAER) are excised as a propeptide. Histidine 38 is a catalytic residue. Residues glutamate 58 and aspartate 60 each contribute to the Mg(2+) site. Histidine 74 functions as the Nucleophile in the catalytic mechanism. 2 disulfides stabilise this stretch: cysteine 78–cysteine 84 and cysteine 80–cysteine 223. Aspartate 118 contacts Mg(2+). The N-linked (GlcNAc...) asparagine glycan is linked to asparagine 286.

Belongs to the arthropod phospholipase D family. Class II subfamily. The cofactor is Mg(2+). As to expression, expressed by the venom gland.

The protein localises to the secreted. The enzyme catalyses an N-(acyl)-sphingosylphosphocholine = an N-(acyl)-sphingosyl-1,3-cyclic phosphate + choline. It catalyses the reaction N-hexanoyl-sphing-4-enine-1-phosphocholine = N-(hexanoyl)-sphing-4-enine-1,3-cyclic phosphate + choline. The catalysed reaction is N-(dodecanoyl)-sphing-4-enine-1-phosphocholine = N-dodecanoyl-sphing-4-enine-1,3-cyclic phosphate + choline. It carries out the reaction a 1-acyl-sn-glycero-3-phosphocholine = a 1-acyl-sn-glycero-2,3-cyclic phosphate + choline. The enzyme catalyses 1-tetradecanoyl-sn-glycero-3-phosphocholine = 1-tetradecanoyl-sn-glycero-2,3-cyclic phosphate + choline. It catalyses the reaction 1-octanoyl-sn-glycero-3-phosphocholine = 1-octanoyl-sn-glycero-2,3-cyclic phosphate + choline. The catalysed reaction is 1-hexadecanoyl-sn-glycero-3-phosphocholine = 1-hexadecanoyl-sn-glycero-2,3-cyclic phosphate + choline. It carries out the reaction an N-(acyl)-sphingosylphosphoethanolamine = an N-(acyl)-sphingosyl-1,3-cyclic phosphate + ethanolamine. The enzyme catalyses N-dodecanoyl-heptadecasphing-4-enine-1-phosphoethanolamine = N-dodecanoyl-heptadecasphing-4-enine-1,3-cyclic phosphate + ethanolamine. In terms of biological role, dermonecrotic toxins cleave the phosphodiester linkage between the phosphate and headgroup of certain phospholipids (sphingolipid and lysolipid substrates), forming an alcohol (often choline) and a cyclic phosphate. This toxin acts on sphingomyelin (SM) with high activity and on lysophosphatidylcholine (LPC) and ceramide phosphoethanolamine (CPE) with low activity. In vivo, shows potent insecticidal activities. On mammals, induces dermonecrosis, hemolysis, increased vascular permeability, edema, inflammatory response, and platelet aggregation. The chain is Dermonecrotic toxin LarSicTox-alphaIB2bi from Loxosceles arizonica (Arizona brown spider).